Here is a 514-residue protein sequence, read N- to C-terminus: Alanine--glyoxylate aminotransferase 2, mitochondrial (514 aa).

The transit peptide at 1 to 41 (MTLIWRHLLRPLCLVTSAPRILEMHPFLSLGTSRTSVTKLS) directs the protein to the mitochondrion. K71 bears the N6-acetyllysine; alternate mark. Residue K71 is modified to N6-succinyllysine; alternate. K84 carries the post-translational modification N6-acetyllysine. Position 262 is an N6-acetyllysine; alternate (K262). K262 is subject to N6-succinyllysine; alternate. Position 304 is an N6-succinyllysine (K304). K350 is subject to N6-(pyridoxal phosphate)lysine. N6-acetyllysine; alternate is present on residues K417 and K420. N6-succinyllysine; alternate occurs at positions 417 and 420.

Belongs to the class-III pyridoxal-phosphate-dependent aminotransferase family. In terms of assembly, homotetramer. It depends on pyridoxal 5'-phosphate as a cofactor. In terms of tissue distribution, expressed in the convoluted tubule in the kidney and in the liver hepatocytes (at protein level).

It localises to the mitochondrion. It carries out the reaction glyoxylate + L-alanine = glycine + pyruvate. The catalysed reaction is (R)-3-amino-2-methylpropanoate + pyruvate = 2-methyl-3-oxopropanoate + L-alanine. The enzyme catalyses 3-oxopropanoate + L-alanine = beta-alanine + pyruvate. It catalyses the reaction 2-oxobutanoate + L-alanine = (2S)-2-aminobutanoate + pyruvate. It carries out the reaction N(omega),N(omega)-dimethyl-L-arginine + pyruvate = 5-(3,3-dimethylguanidino)-2-oxopentanoate + L-alanine. The catalysed reaction is N(omega),N('omega)-dimethyl-L-arginine + pyruvate = 5-(3,3'-dimethylguanidino)-2-oxopentanoate + L-alanine. The enzyme catalyses N(omega),N(omega)-dimethyl-L-arginine + glyoxylate = 5-(3,3-dimethylguanidino)-2-oxopentanoate + glycine. It catalyses the reaction N(omega),N('omega)-dimethyl-L-arginine + glyoxylate = 5-(3,3'-dimethylguanidino)-2-oxopentanoate + glycine. It carries out the reaction N(omega)-methyl-L-arginine + pyruvate = 5-(3-methylguanidino)-2-oxopentanoate + L-alanine. The catalysed reaction is N(omega)-methyl-L-arginine + glyoxylate = 5-(3-methylguanidino)-2-oxopentanoate + glycine. The enzyme catalyses L-ornithine + pyruvate = 5-amino-2-oxopentanoate + L-alanine. It catalyses the reaction L-ornithine + glyoxylate = 5-amino-2-oxopentanoate + glycine. It carries out the reaction (2S)-2-aminobutanoate + glyoxylate = 2-oxobutanoate + glycine. The catalysed reaction is N(omega),N(omega)-dimethyl-L-arginine + oxaloacetate = 5-(3,3-dimethylguanidino)-2-oxopentanoate + L-aspartate. The enzyme catalyses oxaloacetate + L-alanine = L-aspartate + pyruvate. It catalyses the reaction N(omega),N(omega)-dimethyl-L-arginine + 2-oxobutanoate = 5-(3,3-dimethylguanidino)-2-oxopentanoate + (2S)-2-aminobutanoate. It carries out the reaction 2-oxopentanoate + N(omega),N(omega)-dimethyl-L-arginine = 5-(3,3-dimethylguanidino)-2-oxopentanoate + L-2-aminopentanoate. The catalysed reaction is 2-oxohexanoate + N(omega),N(omega)-dimethyl-L-arginine = L-2-aminohexanoate + 5-(3,3-dimethylguanidino)-2-oxopentanoate. In terms of biological role, multifunctional aminotransferase with a broad substrate specificity. Catalyzes the conversion of glyoxylate to glycine using alanine as the amino donor. Catalyzes metabolism of not L- but the D-isomer of D-beta-aminoisobutyric acid to generate 2-methyl-3-oxopropanoate and alanine. Catalyzes the transfer of the amino group from beta-alanine to pyruvate to yield L-alanine and 3-oxopropanoate. Can metabolize NG-monomethyl-L-arginine (NMMA), asymmetric NG,NG-dimethyl-L-arginine (ADMA) and symmetric NG,N'G-dimethyl-L-arginine (SDMA). ADMA is a potent inhibitor of nitric-oxide (NO) synthase, and this activity provides mechanism through which the kidney regulates blood pressure. This is Alanine--glyoxylate aminotransferase 2, mitochondrial (AGXT2) from Homo sapiens (Human).